A 266-amino-acid polypeptide reads, in one-letter code: Putative carbamate hydrolase RutD (266 aa).

The AB hydrolase-1 domain occupies 14-115 (PVVVLISGLG…TVLISVNGWL (102 aa)).

Belongs to the AB hydrolase superfamily. Hydrolase RutD family.

The enzyme catalyses carbamate + 2 H(+) = NH4(+) + CO2. Involved in pyrimidine catabolism. May facilitate the hydrolysis of carbamate, a reaction that can also occur spontaneously. This chain is Putative carbamate hydrolase RutD, found in Shigella sonnei (strain Ss046).